The following is a 122-amino-acid chain: Large ribosomal subunit protein uL14 (122 aa).

This sequence belongs to the universal ribosomal protein uL14 family. As to quaternary structure, part of the 50S ribosomal subunit. Forms a cluster with proteins L3 and L19. In the 70S ribosome, L14 and L19 interact and together make contacts with the 16S rRNA in bridges B5 and B8.

Binds to 23S rRNA. Forms part of two intersubunit bridges in the 70S ribosome. This Nocardioides sp. (strain ATCC BAA-499 / JS614) protein is Large ribosomal subunit protein uL14.